A 253-amino-acid polypeptide reads, in one-letter code: Ras-like protein family member 11A-like (253 aa).

GTP-binding positions include 43 to 50, 90 to 97, and 157 to 160; these read GASNVGKT, DTPCVSLQ, and NKSD. The disordered stretch occupies residues 213–233; it reads GNGEKRKGGLHLARPKSPNMQ.

Belongs to the small GTPase superfamily. Ras family.

The protein resides in the nucleus. The protein localises to the nucleolus. The enzyme catalyses GTP + H2O = GDP + phosphate + H(+). Regulator of rDNA transcription. The sequence is that of Ras-like protein family member 11A-like from Danio rerio (Zebrafish).